A 942-amino-acid chain; its full sequence is Protein inturned (942 aa).

A disordered region spans residues 1 to 52 (MASVASCDSRPSSDELPGDPSSQEEDEDYDFEDRVSDSGSYSSASSDYDDLE). Positions 22 to 31 (SQEEDEDYDF) are enriched in acidic residues. A compositionally biased stretch (low complexity) spans 37-46 (DSGSYSSASS). A PDZ domain is found at 185 to 263 (LVGIIHQTKW…PMQVKLTFEN (79 aa)). Residues serine 670 and serine 674 each carry the phosphoserine modification. Positions 704-754 (TRKPSPSCSSGGSDNGCEGGEDDGFSPHTTPDAVRKQRESQGSDGLEESGT) are disordered.

Belongs to the inturned family. As to quaternary structure, component of the CPLANE (ciliogenesis and planar polarity effectors) complex, composed of INTU, FUZ and WDPCP. Interacts with CPLANE1. Interacts with NPHP4 and DAAM1; INTU is mediating the interaction between NPHP4 and DAAM1.

Its subcellular location is the cytoplasm. It localises to the cell surface. It is found in the cytoskeleton. The protein resides in the cilium basal body. The protein localises to the microtubule organizing center. Its subcellular location is the centrosome. It localises to the centriole. Its function is as follows. Plays a key role in ciliogenesis and embryonic development. Regulator of cilia formation by controlling the organization of the apical actin cytoskeleton and the positioning of the basal bodies at the apical cell surface, which in turn is essential for the normal orientation of elongating ciliary microtubules. Plays a key role in definition of cell polarity via its role in ciliogenesis but not via conversion extension. Has an indirect effect on hedgehog signaling. Proposed to function as core component of the CPLANE (ciliogenesis and planar polarity effectors) complex involved in the recruitment of peripheral IFT-A proteins to basal bodies. Required for recruitment of CPLANE2 to the mother centriole. Binds phosphatidylinositol 3-phosphate with highest affinity, followed by phosphatidylinositol 4-phosphate and phosphatidylinositol 5-phosphate. The protein is Protein inturned (INTU) of Homo sapiens (Human).